A 235-amino-acid chain; its full sequence is Elongation factor Tu, chloroplastic (235 aa).

Positions 1–125 (KNMITGAAQM…AVDEYIPTPV (125 aa)) constitute a tr-type G domain. Position 47 to 50 (47 to 50 (NKQD)) interacts with GTP.

Belongs to the TRAFAC class translation factor GTPase superfamily. Classic translation factor GTPase family. EF-Tu/EF-1A subfamily.

It is found in the plastid. Its subcellular location is the chloroplast. The catalysed reaction is GTP + H2O = GDP + phosphate + H(+). GTP hydrolase that promotes the GTP-dependent binding of aminoacyl-tRNA to the A-site of ribosomes during protein biosynthesis. The protein is Elongation factor Tu, chloroplastic (tufA) of Gracilariopsis lemaneiformis (Red alga).